A 224-amino-acid chain; its full sequence is ATP synthase subunit a (224 aa).

Helical transmembrane passes span 17-37 (FSLNWLSTFLGLLMIPSIYWL), 72-92 (IFISLFSLILFNNFMGLFPYI), 99-119 (LTLTLSLALPLWLCFMLYGWI), 125-145 (MFAHLVPQGTPAILMPFMVCI), 166-186 (IAGHLLLTLLGNTGPSMSYIL), and 187-207 (VTFLLMAQIALLVLESAVAMI).

It belongs to the ATPase A chain family. As to quaternary structure, F-type ATPases have 2 components, CF(1) - the catalytic core - and CF(0) - the membrane proton channel. CF(1) has five subunits: alpha(3), beta(3), gamma(1), delta(1), epsilon(1). CF(0) has three main subunits: a, b and c.

It is found in the mitochondrion inner membrane. In terms of biological role, mitochondrial membrane ATP synthase (F(1)F(0) ATP synthase or Complex V) produces ATP from ADP in the presence of a proton gradient across the membrane which is generated by electron transport complexes of the respiratory chain. F-type ATPases consist of two structural domains, F(1) - containing the extramembraneous catalytic core and F(0) - containing the membrane proton channel, linked together by a central stalk and a peripheral stalk. During catalysis, ATP synthesis in the catalytic domain of F(1) is coupled via a rotary mechanism of the central stalk subunits to proton translocation. Key component of the proton channel; it may play a direct role in the translocation of protons across the membrane. The chain is ATP synthase subunit a (mt:ATPase6) from Drosophila melanogaster (Fruit fly).